Reading from the N-terminus, the 320-residue chain is ATP synthase gamma chain (320 aa).

Belongs to the ATPase gamma chain family. As to quaternary structure, F-type ATPases have 2 components, CF(1) - the catalytic core - and CF(0) - the membrane proton channel. CF(1) has five subunits: alpha(3), beta(3), gamma(1), delta(1), epsilon(1). CF(0) has three main subunits: a, b and c.

The protein localises to the cell membrane. Its function is as follows. Produces ATP from ADP in the presence of a proton gradient across the membrane. The gamma chain is believed to be important in regulating ATPase activity and the flow of protons through the CF(0) complex. The protein is ATP synthase gamma chain of Lactobacillus helveticus (strain DPC 4571).